Consider the following 136-residue polypeptide: Protein PsiE (136 aa).

The next 4 membrane-spanning stretches (helical) occupy residues 15–35, 55–75, 82–102, and 108–128; these read ILQT…VVFL, YELV…ALIV, FHFP…RLII, and PLDV…LWLC.

Belongs to the PsiE family.

Its subcellular location is the cell inner membrane. In Escherichia coli (strain SE11), this protein is Protein PsiE.